We begin with the raw amino-acid sequence, 365 residues long: Putative glutamate--cysteine ligase 2-3 (365 aa).

Belongs to the glutamate--cysteine ligase type 2 family. YbdK subfamily.

It catalyses the reaction L-cysteine + L-glutamate + ATP = gamma-L-glutamyl-L-cysteine + ADP + phosphate + H(+). Its function is as follows. ATP-dependent carboxylate-amine ligase which exhibits weak glutamate--cysteine ligase activity. The sequence is that of Putative glutamate--cysteine ligase 2-3 from Mycolicibacterium smegmatis (strain ATCC 700084 / mc(2)155) (Mycobacterium smegmatis).